Consider the following 209-residue polypeptide: Octanoyltransferase (209 aa).

The BPL/LPL catalytic domain maps to Val-30–Thr-209. Substrate contacts are provided by residues Arg-69–His-76, Ala-143–Gly-145, and Gly-156–Ala-158. Residue Cys-174 is the Acyl-thioester intermediate of the active site.

The protein belongs to the LipB family.

It localises to the cytoplasm. The catalysed reaction is octanoyl-[ACP] + L-lysyl-[protein] = N(6)-octanoyl-L-lysyl-[protein] + holo-[ACP] + H(+). It participates in protein modification; protein lipoylation via endogenous pathway; protein N(6)-(lipoyl)lysine from octanoyl-[acyl-carrier-protein]: step 1/2. Catalyzes the transfer of endogenously produced octanoic acid from octanoyl-acyl-carrier-protein onto the lipoyl domains of lipoate-dependent enzymes. Lipoyl-ACP can also act as a substrate although octanoyl-ACP is likely to be the physiological substrate. In Rickettsia canadensis (strain McKiel), this protein is Octanoyltransferase.